Here is a 468-residue protein sequence, read N- to C-terminus: Uronate isomerase (468 aa).

The protein belongs to the metallo-dependent hydrolases superfamily. Uronate isomerase family.

It carries out the reaction D-glucuronate = D-fructuronate. It catalyses the reaction aldehydo-D-galacturonate = keto-D-tagaturonate. It functions in the pathway carbohydrate metabolism; pentose and glucuronate interconversion. The polypeptide is Uronate isomerase (Bacteroides fragilis (strain ATCC 25285 / DSM 2151 / CCUG 4856 / JCM 11019 / LMG 10263 / NCTC 9343 / Onslow / VPI 2553 / EN-2)).